Reading from the N-terminus, the 357-residue chain is CD4+ T-cell-stimulating antigen (357 aa).

The first 22 residues, 1–22, serve as a signal peptide directing secretion; that stretch reads MKKRTFALALSMIIASGVVLGA. The N-palmitoyl cysteine moiety is linked to residue C23. A lipid anchor (S-diacylglycerol cysteine) is attached at C23.

It belongs to the BMP lipoprotein family.

The protein resides in the cell membrane. The sequence is that of CD4+ T-cell-stimulating antigen (tcsA) from Listeria innocua serovar 6a (strain ATCC BAA-680 / CLIP 11262).